Here is a 248-residue protein sequence, read N- to C-terminus: MRRPIIAGNWKMHMTPSEAVKLVDELIPQVKDAKAEVVVIPPFVDLTEVNKVIQGTNILLGAQDMFWEEKGAYTGEISPLMLKEIGVKYVVIGHSERRQYFGETDEMVNKKVLSALSHGLSPIVCVGESFSQREEGKTFEVVLSQTKEALKGVTHDDIVNVVIAYEPIWAIGTGKTATAKDANEVIKAIRNTIASLYGKEKADLVRIQYGGSVKPENISELMAESDIDGALVGGASLVASDFAKIVNY.

9 to 11 contacts substrate; that stretch reads NWK. His94 acts as the Electrophile in catalysis. Glu166 serves as the catalytic Proton acceptor. Residues Gly172, Ser212, and 233–234 each bind substrate; that span reads GG.

The protein belongs to the triosephosphate isomerase family. Homodimer.

The protein localises to the cytoplasm. The catalysed reaction is D-glyceraldehyde 3-phosphate = dihydroxyacetone phosphate. It functions in the pathway carbohydrate biosynthesis; gluconeogenesis. The protein operates within carbohydrate degradation; glycolysis; D-glyceraldehyde 3-phosphate from glycerone phosphate: step 1/1. Functionally, involved in the gluconeogenesis. Catalyzes stereospecifically the conversion of dihydroxyacetone phosphate (DHAP) to D-glyceraldehyde-3-phosphate (G3P). This chain is Triosephosphate isomerase, found in Thermoanaerobacter sp. (strain X514).